The chain runs to 342 residues: Autoinducer 2 import system permease protein LsrC (342 aa).

At 1–13 (MLKFIQNNREITA) the chain is on the periplasmic side. Residues 14–34 (LLAVVLLFVLPGFLDRQYLSV) form a helical membrane-spanning segment. Over 35 to 38 (QTLT) the chain is Cytoplasmic. A helical membrane pass occupies residues 39–59 (MVYSSAQILILLAMGATLVML). Topologically, residues 60-69 (TRNIDVSVGS) are periplasmic. Residues 70-90 (ITGMCAVLLGMLLNAGYSLPV) traverse the membrane as a helical segment. Topologically, residues 91–92 (AC) are cytoplasmic. A helical transmembrane segment spans residues 93–113 (VATLLLGLLAGFFNGALVAWL). A topological domain (periplasmic) is located at residue Lys114. The helical transmembrane segment at 115 to 135 (IPAIVATLGTLGLYRGIMLLW) threads the bilayer. Residues 136–154 (TGGKWIEGLPAELKQLSAP) are Cytoplasmic-facing. The chain crosses the membrane as a helical span at residues 155-175 (LLLGISAIGWLTIILVAFMAW). Residues 176–212 (LLAKTAFGRSFYATGDNLQGARQLGVRTEAIRIVAFS) are Periplasmic-facing. A helical transmembrane segment spans residues 213–233 (LNGCMAALAGIVFASQIGFIL). Residues 234–251 (NQTGTGLEMKAIAACVLG) are Cytoplasmic-facing. The helical transmembrane segment at 252–272 (GISLLGGSGAIIGAVLGAWFL) threads the bilayer. Over 273 to 283 (TQIDSVLVLLR) the chain is Periplasmic. Residues 284–304 (IPAWWNDFIAGLVLLAVLVFD) form a helical membrane-spanning segment. At 305 to 342 (GRLRCALERNLRRQKYARFMTPPPSVKPASSGKKREAA) the chain is on the cytoplasmic side.

The protein belongs to the binding-protein-dependent transport system permease family. AraH/RbsC subfamily. In terms of assembly, the complex is composed of two ATP-binding proteins (LsrA), two transmembrane proteins (LsrC and LsrD) and a solute-binding protein (LsrB).

Its subcellular location is the cell inner membrane. In terms of biological role, part of the ABC transporter complex LsrABCD involved in autoinducer 2 (AI-2) import. Probably responsible for the translocation of the substrate across the membrane. The sequence is that of Autoinducer 2 import system permease protein LsrC (lsrC) from Shigella flexneri.